Reading from the N-terminus, the 925-residue chain is Nonribosomal peptide synthetase apvA (925 aa).

The adenylation (A) domain stretch occupies residues 15-436; the sequence is AREDSGHVVV…TGRAKENMII (422 aa). A Carrier domain is found at 564 to 644; sequence EPQNDLEKTL…DLATALEKLQ (81 aa). Position 601 is an O-(pantetheine 4'-phosphoryl)serine (serine 601). Residues 663 to 909 form a thioesterase (TE) domain region; the sequence is PLWLVHPGAG…HYSMIGPDHV (247 aa).

It belongs to the NRP synthetase family. ApvA specifically produces aspulvinone E in hyphea, in contrast to melA which produces aspulvinone E in conidia where it is converted to UV-protective Asp-melanin.

The catalysed reaction is 2 3-(4-hydroxyphenyl)pyruvate + AH2 + 2 ATP + O2 = aspulvinone E + A + 2 AMP + CO2 + 2 diphosphate + H2O + H(+). It functions in the pathway secondary metabolite biosynthesis. Functionally, nonribosomal peptide synthetase; part of the gene cluster that mediates the biosynthesis of aspulvinones. The nonribosomal peptide synthetase apvA is responsible for the production of aspulvinone E, the core structure of aspulvinones. ApvA first activates 4-hydroxyphenylpyruvate (HPPA) through its A domain to AMP-HPPA. The HPPA unit is then loaded to the T domain and eventually transferred to the TE domain. Upon loading of another HPPA unit to the T domain, the TE domain promotes the enolate formation on the unit attached. The next step involves head to tail Claisen condensation, followed by the keto-enol tautermerization and a nucleophilic attack on the carbonyl carbon to yield the furanone partial structure. A spontaneous oxidation at the beta-carbon of the thioester might occur in aerobic condition. The TE domain then catalyzes the hydrolysis of the thioester, followed by spontaneous decarboxylation, dehydroxylation and keto-enol tautermerization to give the aspulvinone core. Aspulvinone E is highly unstable and converted to isoaspulvinone E in the presence of light. The structural diversity of the aspulvinones suggests that other tailoring enzymes are involved and have still to be identified. The chain is Nonribosomal peptide synthetase apvA from Aspergillus terreus (strain NIH 2624 / FGSC A1156).